Reading from the N-terminus, the 141-residue chain is Hemoglobin subunit alpha (141 aa).

One can recognise a Globin domain in the interval 1-141 (VLSPADKTNV…VSTVLTSKYR (141 aa)). Position 3 is a phosphoserine (Ser3). At Lys7 the chain carries N6-succinyllysine. Phosphothreonine is present on Thr8. Lys11 is modified (N6-succinyllysine). Lys16 carries the post-translational modification N6-acetyllysine; alternate. The residue at position 16 (Lys16) is an N6-succinyllysine; alternate. Tyr24 carries the phosphotyrosine modification. At Lys40 the chain carries N6-succinyllysine. Position 49 is a phosphoserine (Ser49). His58 contributes to the O2 binding site. Heme b is bound at residue His87. Ser102 bears the Phosphoserine mark. Phosphothreonine is present on Thr108. At Ser124 the chain carries Phosphoserine. Phosphothreonine occurs at positions 134 and 137. Ser138 is subject to Phosphoserine.

Belongs to the globin family. In terms of assembly, heterotetramer of two alpha chains and two beta chains. In terms of tissue distribution, red blood cells.

Functionally, involved in oxygen transport from the lung to the various peripheral tissues. Hemopressin acts as an antagonist peptide of the cannabinoid receptor CNR1. Hemopressin-binding efficiently blocks cannabinoid receptor CNR1 and subsequent signaling. The chain is Hemoglobin subunit alpha (HBA) from Phoca vitulina (Harbor seal).